A 196-amino-acid polypeptide reads, in one-letter code: Glycerol-3-phosphate acyltransferase (196 aa).

5 helical membrane-spanning segments follow: residues 1 to 21 (MIIL…GYLT), 53 to 73 (AITA…GSLL), 78 to 98 (GALV…FLKF), 112 to 132 (IMTS…VMLI), and 152 to 172 (LLFG…VMIF).

This sequence belongs to the PlsY family. In terms of assembly, probably interacts with PlsX.

The protein resides in the cell membrane. The catalysed reaction is an acyl phosphate + sn-glycerol 3-phosphate = a 1-acyl-sn-glycero-3-phosphate + phosphate. It participates in lipid metabolism; phospholipid metabolism. Catalyzes the transfer of an acyl group from acyl-phosphate (acyl-PO(4)) to glycerol-3-phosphate (G3P) to form lysophosphatidic acid (LPA). This enzyme utilizes acyl-phosphate as fatty acyl donor, but not acyl-CoA or acyl-ACP. This Carboxydothermus hydrogenoformans (strain ATCC BAA-161 / DSM 6008 / Z-2901) protein is Glycerol-3-phosphate acyltransferase.